A 350-amino-acid chain; its full sequence is Beta-hexosaminidase (350 aa).

Substrate is bound by residues aspartate 73, arginine 81, arginine 148, and 178 to 179 (KH). Catalysis depends on histidine 191, which acts as the Proton donor/acceptor. The Nucleophile role is filled by aspartate 262.

This sequence belongs to the glycosyl hydrolase 3 family. NagZ subfamily.

It localises to the cytoplasm. The catalysed reaction is Hydrolysis of terminal non-reducing N-acetyl-D-hexosamine residues in N-acetyl-beta-D-hexosaminides.. It participates in cell wall biogenesis; peptidoglycan recycling. Functionally, plays a role in peptidoglycan recycling by cleaving the terminal beta-1,4-linked N-acetylglucosamine (GlcNAc) from peptide-linked peptidoglycan fragments, giving rise to free GlcNAc, anhydro-N-acetylmuramic acid and anhydro-N-acetylmuramic acid-linked peptides. The chain is Beta-hexosaminidase from Bordetella avium (strain 197N).